Consider the following 773-residue polypeptide: Phenylalanine--tRNA ligase beta subunit (773 aa).

The tRNA-binding domain occupies 39–150 (LKAPDKVVVG…GKLELGRPLN (112 aa)). The B5 domain occupies 391 to 467 (KELPIIPISI…RIIGIDNIAS (77 aa)). Mg(2+) contacts are provided by Asp-445, Asp-451, Glu-454, and Glu-455. In terms of domain architecture, FDX-ACB spans 682-773 (SKFPAITRDL…TLKNLGLDLR (92 aa)).

The protein belongs to the phenylalanyl-tRNA synthetase beta subunit family. Type 1 subfamily. As to quaternary structure, tetramer of two alpha and two beta subunits. Mg(2+) is required as a cofactor.

The protein localises to the cytoplasm. It catalyses the reaction tRNA(Phe) + L-phenylalanine + ATP = L-phenylalanyl-tRNA(Phe) + AMP + diphosphate + H(+). The protein is Phenylalanine--tRNA ligase beta subunit of Campylobacter jejuni (strain RM1221).